We begin with the raw amino-acid sequence, 182 residues long: Inner membrane-spanning protein YciB (182 aa).

5 consecutive transmembrane segments (helical) span residues 20–42, 55–75, 76–96, 123–143, and 153–173; these read GGIYQATIVAMVATIVQILWVYY, LIMIMVFGSLTIFLHDSTFIL, LKPTALYWLFSGVLFVSAQFF, LNLAWSAFFFFMGFLNLYIAF, and FKLFGSTGLLIAFVIAQGFWM.

It belongs to the YciB family.

The protein resides in the cell inner membrane. Its function is as follows. Plays a role in cell envelope biogenesis, maintenance of cell envelope integrity and membrane homeostasis. The chain is Inner membrane-spanning protein YciB from Polynucleobacter asymbioticus (strain DSM 18221 / CIP 109841 / QLW-P1DMWA-1) (Polynucleobacter necessarius subsp. asymbioticus).